The primary structure comprises 1350 residues: Probable serine/threonine-protein kinase irlE (1350 aa).

Asn37 carries N-linked (GlcNAc...) asparagine glycosylation. The chain crosses the membrane as a helical span at residues 149 to 169 (FWEILASCYGTISFIKFFNIF). Residues 731–802 (EAELKEKFEI…NIQQNYENQH (72 aa)) adopt a coiled-coil conformation. The segment covering 761–771 (LKKKNKLKKQK) has biased composition (basic residues). Disordered regions lie at residues 761–795 (LKKKNKLKKQKNQQQQQQAKQQAQQQKQQHQQNIQ) and 807–864 (RKFN…TTNS). The span at 772–795 (NQQQQQQAKQQAQQQKQQHQQNIQ) shows a compositional bias: low complexity. Residues 809-823 (FNQQTKGRPISPSSI) are compositionally biased toward polar residues. Low complexity predominate over residues 824-864 (QNQNLNPTLLQNQNQTSNPTPNLESTKKATPTTTTTTTTNS). Residues 903–1166 (KKESNILGRG…LSSVLKHPLF (264 aa)) form the Protein kinase domain. ATP is bound by residues 909-917 (LGRGSNGTL) and Lys932. Residue Asp1034 is the Proton acceptor of the active site. The 178-residue stretch at 1169–1346 (SLKKIKFLES…KNSIHFSNDT (178 aa)) folds into the KEN domain.

This sequence belongs to the protein kinase superfamily. Ser/Thr protein kinase family.

It is found in the membrane. The enzyme catalyses L-seryl-[protein] + ATP = O-phospho-L-seryl-[protein] + ADP + H(+). It catalyses the reaction L-threonyl-[protein] + ATP = O-phospho-L-threonyl-[protein] + ADP + H(+). The protein is Probable serine/threonine-protein kinase irlE (irlE) of Dictyostelium discoideum (Social amoeba).